We begin with the raw amino-acid sequence, 427 residues long: Histidine--tRNA ligase (427 aa).

The protein belongs to the class-II aminoacyl-tRNA synthetase family. Homodimer.

Its subcellular location is the cytoplasm. It catalyses the reaction tRNA(His) + L-histidine + ATP = L-histidyl-tRNA(His) + AMP + diphosphate + H(+). This is Histidine--tRNA ligase from Alteromonas mediterranea (strain DSM 17117 / CIP 110805 / LMG 28347 / Deep ecotype).